The primary structure comprises 162 residues: N5-carboxyaminoimidazole ribonucleotide mutase (162 aa).

Substrate is bound by residues S11, D14, and R41.

The protein belongs to the AIR carboxylase family. Class I subfamily.

The catalysed reaction is 5-carboxyamino-1-(5-phospho-D-ribosyl)imidazole + H(+) = 5-amino-1-(5-phospho-D-ribosyl)imidazole-4-carboxylate. It participates in purine metabolism; IMP biosynthesis via de novo pathway; 5-amino-1-(5-phospho-D-ribosyl)imidazole-4-carboxylate from 5-amino-1-(5-phospho-D-ribosyl)imidazole (N5-CAIR route): step 2/2. Functionally, catalyzes the conversion of N5-carboxyaminoimidazole ribonucleotide (N5-CAIR) to 4-carboxy-5-aminoimidazole ribonucleotide (CAIR). The sequence is that of N5-carboxyaminoimidazole ribonucleotide mutase from Brucella melitensis biotype 1 (strain ATCC 23456 / CCUG 17765 / NCTC 10094 / 16M).